Reading from the N-terminus, the 92-residue chain is Small ribosomal subunit protein uS19 (92 aa).

The protein belongs to the universal ribosomal protein uS19 family.

Protein S19 forms a complex with S13 that binds strongly to the 16S ribosomal RNA. The chain is Small ribosomal subunit protein uS19 from Bartonella quintana (strain Toulouse) (Rochalimaea quintana).